The following is a 458-amino-acid chain: Adenylosuccinate synthetase (458 aa).

Residues 17 to 23 (GDEGKGK) and 45 to 47 (GHT) each bind GTP. Catalysis depends on D18, which acts as the Proton acceptor. Mg(2+) contacts are provided by D18 and G45. IMP is bound by residues 18 to 21 (DEGK), 43 to 46 (NAGH), T137, R151, Q247, T262, and R330. H46 functions as the Proton donor in the catalytic mechanism. 326–332 (VTTGRSR) serves as a coordination point for substrate. GTP contacts are provided by residues R332, 358 to 360 (KLD), and 440 to 442 (STS).

The protein belongs to the adenylosuccinate synthetase family. In terms of assembly, homodimer. The cofactor is Mg(2+).

It is found in the cytoplasm. It catalyses the reaction IMP + L-aspartate + GTP = N(6)-(1,2-dicarboxyethyl)-AMP + GDP + phosphate + 2 H(+). It functions in the pathway purine metabolism; AMP biosynthesis via de novo pathway; AMP from IMP: step 1/2. Functionally, plays an important role in the de novo pathway of purine nucleotide biosynthesis. Catalyzes the first committed step in the biosynthesis of AMP from IMP. This Acidovorax ebreus (strain TPSY) (Diaphorobacter sp. (strain TPSY)) protein is Adenylosuccinate synthetase.